An 81-amino-acid polypeptide reads, in one-letter code: MERGVSYYLWIPFKFIHQTFGSLLLKLLGLRSPSDHSFPEDGEEEVKVVEVSSRGLPGKKNVLKKSRESSGKPGGTNKKPF.

Residues 1-54 (MERGVSYYLWIPFKFIHQTFGSLLLKLLGLRSPSDHSFPEDGEEEVKVVEVSSR) constitute a propeptide that is removed on maturation. A disordered region spans residues 57–81 (PGKKNVLKKSRESSGKPGGTNKKPF).

The protein belongs to the brassicaceae elicitor peptide family.

Elicitor of plant defense. The protein is Elicitor peptide 4 (PEP4) of Arabidopsis thaliana (Mouse-ear cress).